Consider the following 646-residue polypeptide: MADLSIIFPDGSEKQFPVGTTGEEIAASISPGLKKQALAIKLDGELVDLRRELSSGGSIEIITYKNNEGLEVLRHSSAHLLAQAIKRLFNDVKLGVGPVIEEGFYYDIDMEHKLTPEDLPKIEKEMKRIIDENLEIKRVEVSRNKAQEMFSDIGDDLKLELIDAIPENEQVTIYEQGEFFDLCRGIHVPSTSKIKAFKLLSISGAYWRGDSNNKQLQRIYGTAFEKKGQLEEHLQILEERKERDHRKLGKELGIFTVSQKVGQGLPLWLPKGATIRRNVERYIVDLEERLGYSHVYTPVLGNVELYKTSGHWDHYQDDMFPTMEMDNEELVLRPMNCPHHMMVFKNQLWSYRNLPVRIAELGTMHRHEMSGALAGLQRVRAMTLNDAHIFARPDQLKEEFIRVVELVQHVYKDFGIDDYYFRLSYRDPEDKEKYVDNDEMWEKAQAMLKETMEDMNLEYVEAEGEAAFYGPKLDVQVKTALGKDETLSTIQLDFHLPERFDLTYIGEDGNQHRPVVIHRGVVSTMERFVAFLIEEYKGAFPTWLAPVQVKIIPVSLQAHLDYAKDIEEKLRYQGVRVELDERDEKIGYKIREAQTQKVPFALVLGDKEMESNSVNYRRYGEQDTETLEFDQFLNLIKEEVDNKKIK.

The TGS domain occupies methionine 1 to threonine 63. Positions aspartate 244 to proline 541 are catalytic. Zn(2+) contacts are provided by cysteine 337, histidine 388, and histidine 518.

It belongs to the class-II aminoacyl-tRNA synthetase family. Homodimer. The cofactor is Zn(2+).

It is found in the cytoplasm. It carries out the reaction tRNA(Thr) + L-threonine + ATP = L-threonyl-tRNA(Thr) + AMP + diphosphate + H(+). Catalyzes the attachment of threonine to tRNA(Thr) in a two-step reaction: L-threonine is first activated by ATP to form Thr-AMP and then transferred to the acceptor end of tRNA(Thr). Also edits incorrectly charged L-seryl-tRNA(Thr). The protein is Threonine--tRNA ligase of Oceanobacillus iheyensis (strain DSM 14371 / CIP 107618 / JCM 11309 / KCTC 3954 / HTE831).